A 458-amino-acid polypeptide reads, in one-letter code: Retinoic acid receptor alpha (458 aa).

The segment at 1–86 (MASNGGSCPS…PPPLPRIYKP (86 aa)) is modulating. Over residues 54 to 68 (TPSPATIETQSTSSE) the composition is skewed to polar residues. The segment at 54 to 76 (TPSPATIETQSTSSEEIVPSPPS) is disordered. 2 NR C4-type zinc fingers span residues 87 to 107 (CFVCQDKSSGYHYGVSACEGC) and 123 to 147 (CHRDKTCIINKVTRNRCQYCRLQKC). The nuclear receptor DNA-binding region spans 87–152 (CFVCQDKSSG…RLQKCFEVGM (66 aa)). Residues 153–182 (SKESVRNDRNKKKKQEAPKQECTESYIITP) form a hinge region. Residues 183–417 (EVEDLVEKVR…PLIQEMLENS (235 aa)) enclose the NR LBD domain. Positions 408 to 416 (PLIQEMLEN) match the 9aaTAD motif. Residues 417–458 (SEGLDSLTGQPPRASSLAPPPGSCSPSLSPSSNRSSPTSHSP) are disordered. The span at 440–458 (CSPSLSPSSNRSSPTSHSP) shows a compositional bias: low complexity.

The protein belongs to the nuclear hormone receptor family. NR1 subfamily. In terms of assembly, heterodimer; with an rxr molecule. Binds DNA preferentially as a rar/rxr heterodimer. As to expression, expressed in forelimb, in the distal forelimb blastema, kidney, liver and hindlimb blastemal mesenchymal cells.

The protein localises to the nucleus. In terms of biological role, receptor for retinoic acid. Retinoic acid receptors bind as heterodimers to their target response elements in response to their ligands, all-trans or 9-cis retinoic acid, and regulate gene expression in various biological processes. The rar/rxr heterodimers bind to the retinoic acid response elements (RARE) composed of tandem 5'-AGGTCA-3' sites known as DR1-DR5. Retinoic acid signaling appears to be involved in specifying proximal-distal axis in limb regeneration. This is Retinoic acid receptor alpha (RARA) from Notophthalmus viridescens (Eastern newt).